The following is a 581-amino-acid chain: Proline--tRNA ligase (581 aa).

This sequence belongs to the class-II aminoacyl-tRNA synthetase family. ProS type 1 subfamily. As to quaternary structure, homodimer.

It is found in the cytoplasm. The enzyme catalyses tRNA(Pro) + L-proline + ATP = L-prolyl-tRNA(Pro) + AMP + diphosphate. Functionally, catalyzes the attachment of proline to tRNA(Pro) in a two-step reaction: proline is first activated by ATP to form Pro-AMP and then transferred to the acceptor end of tRNA(Pro). As ProRS can inadvertently accommodate and process non-cognate amino acids such as alanine and cysteine, to avoid such errors it has two additional distinct editing activities against alanine. One activity is designated as 'pretransfer' editing and involves the tRNA(Pro)-independent hydrolysis of activated Ala-AMP. The other activity is designated 'posttransfer' editing and involves deacylation of mischarged Ala-tRNA(Pro). The misacylated Cys-tRNA(Pro) is not edited by ProRS. This is Proline--tRNA ligase from Methylibium petroleiphilum (strain ATCC BAA-1232 / LMG 22953 / PM1).